Here is a 314-residue protein sequence, read N- to C-terminus: Pantothenate kinase (314 aa).

An ATP-binding site is contributed by 93–100 (GSVAVGKS).

This sequence belongs to the prokaryotic pantothenate kinase family.

Its subcellular location is the cytoplasm. The enzyme catalyses (R)-pantothenate + ATP = (R)-4'-phosphopantothenate + ADP + H(+). It functions in the pathway cofactor biosynthesis; coenzyme A biosynthesis; CoA from (R)-pantothenate: step 1/5. This chain is Pantothenate kinase, found in Shewanella denitrificans (strain OS217 / ATCC BAA-1090 / DSM 15013).